Here is a 660-residue protein sequence, read N- to C-terminus: Probable beta-hexosaminidase fdl (660 aa).

Residues 1–36 form the signal peptide; sequence MSLAVSLRRALLVLLTGAIFILTVLYWNQGVTKAQA. N210, N412, and N452 each carry an N-linked (GlcNAc...) asparagine glycan.

It belongs to the glycosyl hydrolase 20 family. As to expression, in third instar larval and early pupal brains, expressed in cells sending projections across the interhemispheric junction. In adult brain, expressed in mushroom body, ellipsoid body and pars intercerebralis.

The enzyme catalyses Hydrolysis of terminal non-reducing N-acetyl-D-hexosamine residues in N-acetyl-beta-D-hexosaminides.. In terms of biological role, involved in brain restructurization via hormonal control during metamorphosis. Implicated in N-glycan processing. This Drosophila melanogaster (Fruit fly) protein is Probable beta-hexosaminidase fdl (fdl).